A 344-amino-acid polypeptide reads, in one-letter code: GTP 3',8-cyclase (344 aa).

The Radical SAM core domain maps to 19–239 (PFGRTIDYLR…ANYTLTDLPD (221 aa)). Arg-28 is a GTP binding site. [4Fe-4S] cluster contacts are provided by Cys-35 and Cys-39. Tyr-41 provides a ligand contact to S-adenosyl-L-methionine. Cys-42 serves as a coordination point for [4Fe-4S] cluster. Arg-77 provides a ligand contact to GTP. Gly-81 contributes to the S-adenosyl-L-methionine binding site. Residue Thr-111 participates in GTP binding. Ser-135 contacts S-adenosyl-L-methionine. Lys-171 serves as a coordination point for GTP. Residue Met-205 coordinates S-adenosyl-L-methionine. [4Fe-4S] cluster is bound by residues Cys-268 and Cys-271. 273-275 (RVR) contributes to the GTP binding site. Cys-285 contacts [4Fe-4S] cluster.

It belongs to the radical SAM superfamily. MoaA family. Monomer and homodimer. It depends on [4Fe-4S] cluster as a cofactor.

It catalyses the reaction GTP + AH2 + S-adenosyl-L-methionine = (8S)-3',8-cyclo-7,8-dihydroguanosine 5'-triphosphate + 5'-deoxyadenosine + L-methionine + A + H(+). The protein operates within cofactor biosynthesis; molybdopterin biosynthesis. Functionally, catalyzes the cyclization of GTP to (8S)-3',8-cyclo-7,8-dihydroguanosine 5'-triphosphate. The polypeptide is GTP 3',8-cyclase (Rhodopseudomonas palustris (strain ATCC BAA-98 / CGA009)).